Consider the following 139-residue polypeptide: Asp-hemolysin (139 aa).

Residues 1–5 constitute a propeptide that is removed on maturation; sequence MASVQ. The disordered stretch occupies residues 47 to 79; it reads TSEDVQQKTAPPGGSVNVNSCGRSDASSGTTGG. The segment covering 62-75 has biased composition (polar residues); sequence VNVNSCGRSDASSG.

The protein belongs to the aegerolysin family.

The chain is Asp-hemolysin from Aspergillus fumigatus (strain ATCC MYA-4609 / CBS 101355 / FGSC A1100 / Af293) (Neosartorya fumigata).